Consider the following 339-residue polypeptide: Very-long-chain 3-oxoacyl-CoA reductase (339 aa).

The chain crosses the membrane as a helical span at residues 21–41 (WTTFLLALGSFNALRIIYQTL). NADP(+) is bound by residues Val-67, Asn-96, Asp-121, Asn-148, Tyr-215, Lys-219, Val-248, and Ser-250. The active-site Proton acceptor is Tyr-215. The active-site Lowers pKa of active site Tyr is Lys-219.

It belongs to the short-chain dehydrogenases/reductases (SDR) family.

The protein localises to the endoplasmic reticulum membrane. The catalysed reaction is a very-long-chain (3R)-3-hydroxyacyl-CoA + NADP(+) = a very-long-chain 3-oxoacyl-CoA + NADPH + H(+). Its pathway is lipid metabolism; fatty acid biosynthesis. Component of the microsomal membrane bound fatty acid elongation system, which produces the 26-carbon very long-chain fatty acids (VLCFA) from palmitate. Catalyzes the reduction of the 3-ketoacyl-CoA intermediate that is formed in each cycle of fatty acid elongation. VLCFAs serve as precursors for ceramide and sphingolipids. The sequence is that of Very-long-chain 3-oxoacyl-CoA reductase from Coprinopsis cinerea (strain Okayama-7 / 130 / ATCC MYA-4618 / FGSC 9003) (Inky cap fungus).